Here is a 242-residue protein sequence, read N- to C-terminus: Anamorsin homolog (242 aa).

The segment at Met1 to Leu140 is N-terminal SAM-like domain. Residues Leu140–Ala159 are disordered. Positions Ser141 to Asn162 are linker. A compositionally biased stretch (basic and acidic residues) spans Glu148–Ala159. Residues Cys205, Cys208, Cys216, and Cys219 each contribute to the [4Fe-4S] cluster site. Short sequence motifs (cx2C motif) lie at residues Cys205–Cys208 and Cys216–Cys219. A fe-S binding site B region spans residues Cys205–Cys219.

This sequence belongs to the anamorsin family. In terms of assembly, monomer. [4Fe-4S] cluster serves as cofactor.

It localises to the cytoplasm. The protein resides in the mitochondrion intermembrane space. Component of the cytosolic iron-sulfur (Fe-S) protein assembly (CIA) machinery. Required for the maturation of extramitochondrial Fe-S proteins. Part of an electron transfer chain functioning in an early step of cytosolic Fe-S biogenesis, facilitating the de novo assembly of a [4Fe-4S] cluster on the cytosolic Fe-S scaffold complex. Electrons are transferred from NADPH via a FAD- and FMN-containing diflavin oxidoreductase. Together with the diflavin oxidoreductase, also required for the assembly of the diferric tyrosyl radical cofactor of ribonucleotide reductase (RNR), probably by providing electrons for reduction during radical cofactor maturation in the catalytic small subunit. This chain is Anamorsin homolog, found in Plasmodium vivax (strain Salvador I).